A 134-amino-acid chain; its full sequence is Profilin-2 (134 aa).

An intrachain disulfide couples cysteine 13 to cysteine 118. The Involved in PIP2 interaction motif lies at 84–100 (AVIRGKKGSGGITIKKT). Threonine 114 bears the Phosphothreonine mark.

The protein belongs to the profilin family. As to quaternary structure, occurs in many kinds of cells as a complex with monomeric actin in a 1:1 ratio. Phosphorylated by MAP kinases.

The protein resides in the cytoplasm. It localises to the cytoskeleton. Functionally, binds to actin and affects the structure of the cytoskeleton. At high concentrations, profilin prevents the polymerization of actin, whereas it enhances it at low concentrations. This chain is Profilin-2, found in Olea europaea (Common olive).